Consider the following 295-residue polypeptide: Protoheme IX farnesyltransferase (295 aa).

The next 7 helical transmembrane spans lie at 43–63 (PIQLALLVLGTSAAAGGVAAL), 92–112 (SAFVLGVLMCIGSLFLLYALV), 114–134 (PLAALFTLLTIFSYLGWYTPA), 140–160 (WSTEIGAVAGAFPPLIGWSAG), 166–186 (ALGWVLFGVLFFWQVPHFMAV), 231–251 (LLWGLTTWFYGVAAAVTGLWF), and 272–292 (FFASIGYLPLVLGALVIDRLF).

Belongs to the UbiA prenyltransferase family. Protoheme IX farnesyltransferase subfamily.

It localises to the cell inner membrane. It catalyses the reaction heme b + (2E,6E)-farnesyl diphosphate + H2O = Fe(II)-heme o + diphosphate. Its pathway is porphyrin-containing compound metabolism; heme O biosynthesis; heme O from protoheme: step 1/1. Its function is as follows. Converts heme B (protoheme IX) to heme O by substitution of the vinyl group on carbon 2 of heme B porphyrin ring with a hydroxyethyl farnesyl side group. This Opitutus terrae (strain DSM 11246 / JCM 15787 / PB90-1) protein is Protoheme IX farnesyltransferase.